A 57-amino-acid chain; its full sequence is UPF0391 membrane protein Nwi_2359 (57 aa).

2 consecutive transmembrane segments (helical) span residues 4–24 (WVVTFLVIALIAGVLGFGGIA) and 30–50 (IAKIIFFIALILFVISAVVGF).

This sequence belongs to the UPF0391 family.

Its subcellular location is the cell membrane. The protein is UPF0391 membrane protein Nwi_2359 of Nitrobacter winogradskyi (strain ATCC 25391 / DSM 10237 / CIP 104748 / NCIMB 11846 / Nb-255).